Reading from the N-terminus, the 108-residue chain is MAIRQATTPQHDAGTVLERKEQALKPPAMYKVLLLNDDYTPMEFVVMILQQYFSKDRETATQIMLTVHREGRGVCGIYTRDIAATKVELVSTHARQAGHPLQCVMEEA.

This sequence belongs to the ClpS family. In terms of assembly, binds to the N-terminal domain of the chaperone ClpA.

Its function is as follows. Involved in the modulation of the specificity of the ClpAP-mediated ATP-dependent protein degradation. In Ralstonia nicotianae (strain ATCC BAA-1114 / GMI1000) (Ralstonia solanacearum), this protein is ATP-dependent Clp protease adapter protein ClpS.